The sequence spans 908 residues: DNA mismatch repair protein MutS (908 aa).

Position 659–666 (659–666 (GPNMAGKS)) interacts with ATP.

The protein belongs to the DNA mismatch repair MutS family.

Functionally, this protein is involved in the repair of mismatches in DNA. It is possible that it carries out the mismatch recognition step. This protein has a weak ATPase activity. The protein is DNA mismatch repair protein MutS of Parvibaculum lavamentivorans (strain DS-1 / DSM 13023 / NCIMB 13966).